A 395-amino-acid polypeptide reads, in one-letter code: Elongation factor Tu (395 aa).

Positions 10-205 (KPHCNIGTIG…AVDSYIPQPE (196 aa)) constitute a tr-type G domain. Residues 19 to 26 (GHVDHGKT) are G1. 19-26 (GHVDHGKT) contacts GTP. A Mg(2+)-binding site is contributed by Thr26. A G2 region spans residues 60–64 (GITIA). A G3 region spans residues 81–84 (DCPG). Residues 81–85 (DCPGH) and 136–139 (NKMD) each bind GTP. Residues 136–139 (NKMD) form a G4 region. The interval 173–175 (SAL) is G5.

Belongs to the TRAFAC class translation factor GTPase superfamily. Classic translation factor GTPase family. EF-Tu/EF-1A subfamily. In terms of assembly, monomer.

The protein resides in the cytoplasm. The catalysed reaction is GTP + H2O = GDP + phosphate + H(+). Functionally, GTP hydrolase that promotes the GTP-dependent binding of aminoacyl-tRNA to the A-site of ribosomes during protein biosynthesis. The chain is Elongation factor Tu from Acidiphilium cryptum (strain JF-5).